The chain runs to 533 residues: Beta-1,4-mannosyl-glycoprotein 4-beta-N-acetylglucosaminyltransferase (533 aa).

The Cytoplasmic portion of the chain corresponds to 1-7; the sequence is MKMRRYK. A helical; Signal-anchor for type II membrane protein transmembrane segment spans residues 8 to 23; sequence LFLMFCMAGLCLISFL. Residues 24 to 533 lie on the Lumenal side of the membrane; the sequence is HFFKTLSYVT…ARGKLDEAEV (510 aa). The tract at residues 119–158 is disordered; the sequence is KPGTKMLERPPPGRPEEKPEGANGSSARRPPRYLLSARER. N-linked (GlcNAc...) asparagine glycans are attached at residues N141, N241, N259, and N397. The segment at 507-533 is disordered; it reads STAAGGWRHRGPEGRPPARGKLDEAEV.

It belongs to the glycosyltransferase 17 family. In terms of assembly, interacts with MGAT4D.

It is found in the golgi apparatus membrane. It catalyses the reaction N(4)-{beta-D-GlcNAc-(1-&gt;2)-alpha-D-Man-(1-&gt;3)-[beta-D-GlcNAc-(1-&gt;2)-alpha-D-Man-(1-&gt;6)]-beta-D-Man-(1-&gt;4)-beta-D-GlcNAc-(1-&gt;4)-beta-D-GlcNAc}-L-asparaginyl-[protein] + UDP-N-acetyl-alpha-D-glucosamine = N(4)-{beta-D-GlcNAc-(1-&gt;2)-alpha-D-Man-(1-&gt;3)-[beta-D-GlcNAc-(1-&gt;4)]-[beta-D-GlcNAc-(1-&gt;2)-alpha-D-Man-(1-&gt;6)]-beta-D-Man-(1-&gt;4)-beta-D-GlcNAc-(1-&gt;4)-beta-D-GlcNAc}-L-asparaginyl-[protein] + UDP + H(+). The protein operates within protein modification; protein glycosylation. In terms of biological role, it is involved in the regulation of the biosynthesis and biological function of glycoprotein oligosaccharides. Catalyzes the addition of N-acetylglucosamine in beta 1-4 linkage to the beta-linked mannose of the trimannosyl core of N-linked sugar chains, called bisecting N-acetylglucosamine (GlcNAc). It is one of the most important enzymes involved in the regulation of the biosynthesis of glycoprotein oligosaccharides. The addition of this bisecting GlcNAc residue alters not only the composition, but also the conformation of the N-glycan. The introduction of the bisecting GlcNAc residue results in the suppression of further processing and elongation of N-glycans, precluding the formation of beta-1,6 GlcNAc branching, catalyzed by MGAT5 since it is unable to use the bisected oligosaccharide as a substrate. Addition of bisecting N-acetylglucosamine to CDH1/E-cadherin modulates CDH1 cell membrane location. Inhibits NeuAc-alpha-2,3-Gal-beta-1,4-GlcNAc- formation which modulates sialylation levels and plays a role in cell migration regulation. In brain, addition of bisecting N-acetylglucosamine to BACE1 blocks its lysosomal targeting in response to oxidative stress and further degradation which increases its location to early endosome and the APP cleavage. This Homo sapiens (Human) protein is Beta-1,4-mannosyl-glycoprotein 4-beta-N-acetylglucosaminyltransferase.